Reading from the N-terminus, the 351-residue chain is Thiamine-phosphate synthase (351 aa).

The interval 1 to 128 is unknown; the sequence is MLNSNTKDHE…SKIASEIRYE (128 aa). The segment at 129–351 is thiamine-phosphate synthase; the sequence is IYTVEIDLLS…MILKELSHEN (223 aa). Residues 180 to 184 and Asn212 each bind 4-amino-2-methyl-5-(diphosphooxymethyl)pyrimidine; that span reads QHRFK. Positions 213 and 232 each coordinate Mg(2+). Ser251 contacts 4-amino-2-methyl-5-(diphosphooxymethyl)pyrimidine. 277–279 is a 2-[(2R,5Z)-2-carboxy-4-methylthiazol-5(2H)-ylidene]ethyl phosphate binding site; sequence TTT. Lys280 provides a ligand contact to 4-amino-2-methyl-5-(diphosphooxymethyl)pyrimidine. Gly307 is a 2-[(2R,5Z)-2-carboxy-4-methylthiazol-5(2H)-ylidene]ethyl phosphate binding site.

This sequence belongs to the thiamine-phosphate synthase family. Mg(2+) is required as a cofactor.

The enzyme catalyses 2-[(2R,5Z)-2-carboxy-4-methylthiazol-5(2H)-ylidene]ethyl phosphate + 4-amino-2-methyl-5-(diphosphooxymethyl)pyrimidine + 2 H(+) = thiamine phosphate + CO2 + diphosphate. It catalyses the reaction 2-(2-carboxy-4-methylthiazol-5-yl)ethyl phosphate + 4-amino-2-methyl-5-(diphosphooxymethyl)pyrimidine + 2 H(+) = thiamine phosphate + CO2 + diphosphate. The catalysed reaction is 4-methyl-5-(2-phosphooxyethyl)-thiazole + 4-amino-2-methyl-5-(diphosphooxymethyl)pyrimidine + H(+) = thiamine phosphate + diphosphate. It functions in the pathway cofactor biosynthesis; thiamine diphosphate biosynthesis; thiamine phosphate from 4-amino-2-methyl-5-diphosphomethylpyrimidine and 4-methyl-5-(2-phosphoethyl)-thiazole: step 1/1. Functionally, condenses 4-methyl-5-(beta-hydroxyethyl)thiazole monophosphate (THZ-P) and 2-methyl-4-amino-5-hydroxymethyl pyrimidine pyrophosphate (HMP-PP) to form thiamine monophosphate (TMP). The protein is Thiamine-phosphate synthase of Prochlorococcus marinus (strain AS9601).